The sequence spans 339 residues: HTH-type transcriptional regulator KdgR (339 aa).

The HTH lacI-type domain maps to threonine 9–isoleucine 64. Residues isoleucine 11–asparagine 30 constitute a DNA-binding region (H-T-H motif).

Functionally, transcriptional repressor of the kdgRKAT and kduID operons for pectin utilization. This is HTH-type transcriptional regulator KdgR (kdgR) from Bacillus subtilis (strain 168).